We begin with the raw amino-acid sequence, 308 residues long: MRSEFWFPSMGSLLPPVLLLWLLSCPRLQLGHAQDPAMVHLPGGRFLMGTDAPDGRDGEGPAREVTVKPFAIDIFPVTNKDFREFVREKKYQTEAEAFGWSFVFEDFVSPELRKQENLMPAVHWWQPVPKAFWRQPAGPGSGIREKLELPVVHVSWNDAGAYCAWRGRRLPTEEEWEFAARGGLKGQVYPWGNRFQPNRTNLWQGKFPKGDKAEDGFHGLSPVNAFPPQNNYGLYDLMGNVWEWTASTYQPAGQDMRVLRGASWIDTADGSANHRARVTTRMGNTPDSASDNLGFRCASSAGRPKEDL.

Residues 1 to 33 (MRSEFWFPSMGSLLPPVLLLWLLSCPRLQLGHA) form the signal peptide. A disulfide bridge links Cys-163 with Cys-297. The N-linked (GlcNAc...) asparagine glycan is linked to Asn-198. The Ca(2+) site is built by Asn-201, Leu-202, Asp-215, Phe-217, Asp-236, Gly-239, Val-241, and Glu-243. Over residues 281 to 291 (RMGNTPDSASD) the composition is skewed to polar residues. Residues 281–308 (RMGNTPDSASDNLGFRCASSAGRPKEDL) form a disordered region. The short motif at 305 to 308 (KEDL) is the Non-canonical ER retention motif element.

It belongs to the sulfatase-modifying factor family. In terms of assembly, homodimer and heterodimer with SUMF1.

The protein localises to the endoplasmic reticulum lumen. Functionally, lacks formylglycine generating activity and is unable to convert newly synthesized inactive sulfatases to their active form. Inhibits the activation of sulfatases by SUMF1. The polypeptide is Inactive C-alpha-formylglycine-generating enzyme 2 (Mus musculus (Mouse)).